Here is a 459-residue protein sequence, read N- to C-terminus: MSWSILKLLREKPEELKEHVKKRFMDPSIVDEAYKTDLEWRRTLTYIQELRHKHNVVSREIPKLKGVDKEKKIKEAKQLLKELEEVEKKLKELEEKRQKLLFSLPNIVHETVPVGPDDTYNVPIRFWGKPRVWKGFIDQFKEQTEKYGFKVEYEVIDWKPVGHADMLEKVLRLGDTFKAGQVAGSRFYYLFNDIVFLDMALLAYAIDYLTSKGYTLVLPPYMLRHKVMMGVIDMDTFKDAIYKIEGEDLYLIATAEHPLAALHAWEDIPEEELPLKYVGISPCFRKEAGAGNRDLKGIFRVHQFHKVEQFVYAKPEDSWDIMEELISNAEHLFRGLGIPYRIVNIASGDLGAPAAKKYDLEAWMPAQGRYREMVSCSNVTDWQAFRLRIRLIRRKGMVKEYLHTLNSTAIASTRTITAILENFQEPDGTVIVPKVLRKYLEVFKSAPIDAIHPVKKEKN.

254 to 256 (TAE) contacts L-serine. ATP contacts are provided by residues 285–287 (RKE) and valine 301. Residue glutamate 308 participates in L-serine binding. 372-375 (EMVS) contacts ATP. An L-serine-binding site is contributed by threonine 408.

This sequence belongs to the class-II aminoacyl-tRNA synthetase family. Type-1 seryl-tRNA synthetase subfamily. Homodimer. The tRNA molecule binds across the dimer.

It is found in the cytoplasm. It carries out the reaction tRNA(Ser) + L-serine + ATP = L-seryl-tRNA(Ser) + AMP + diphosphate + H(+). The catalysed reaction is tRNA(Sec) + L-serine + ATP = L-seryl-tRNA(Sec) + AMP + diphosphate + H(+). It functions in the pathway aminoacyl-tRNA biosynthesis; selenocysteinyl-tRNA(Sec) biosynthesis; L-seryl-tRNA(Sec) from L-serine and tRNA(Sec): step 1/1. Functionally, catalyzes the attachment of serine to tRNA(Ser). Is also able to aminoacylate tRNA(Sec) with serine, to form the misacylated tRNA L-seryl-tRNA(Sec), which will be further converted into selenocysteinyl-tRNA(Sec). The chain is Serine--tRNA ligase from Staphylothermus marinus (strain ATCC 43588 / DSM 3639 / JCM 9404 / F1).